The chain runs to 587 residues: Prolycopene isomerase 1, chloroplastic (587 aa).

The span at 1 to 13 shows a compositional bias: low complexity; the sequence is MLCLSLNSSSTSP. The interval 1 to 21 is disordered; sequence MLCLSLNSSSTSPPKSPLHHS. Residues 1–50 constitute a chloroplast transit peptide; the sequence is MLCLSLNSSSTSPPKSPLHHSFSRRSMRSWVCSPRVQRKKLGFWSSPKAV.

The protein belongs to the carotenoid/retinoid oxidoreductase family. CrtISO subfamily. Requires NAD(+) as cofactor. NADP(+) is required as a cofactor. It depends on FAD as a cofactor. As to expression, up-regulated in the flower buds and flower lip tissue, while it is weakly expressed in leaves.

The protein resides in the plastid. It localises to the chloroplast membrane. It catalyses the reaction 7,7',9,9'-tetra-cis-lycopene = all-trans-lycopene. Its pathway is carotenoid biosynthesis; lycopene biosynthesis. Its function is as follows. Carotene cis-trans-isomerase that converts 7,9,9'-tri-cis-neurosporene to 9'-cis-neurosporene and 7,9,9',7'-tetra-cis-lycopene (also known as prolycopene) into all-trans-lycopene. Isomerization requires redox-active components, suggesting that isomerization is achieved by a reversible redox reaction acting at specific double bonds. Isomerizes adjacent cis-double bonds at C7 and C9 pairwise into the trans-configuration, but is incapable of isomerizing single cis-double bonds at C9 and C9'. This is Prolycopene isomerase 1, chloroplastic (CRTISO1) from Oncidium hybrid cultivar (Orchid).